The following is a 125-amino-acid chain: Small ribosomal subunit protein bS6m (125 aa).

This sequence belongs to the bacterial ribosomal protein bS6 family. In terms of assembly, component of the mitochondrial ribosome small subunit (28S) which comprises a 12S rRNA and about 30 distinct proteins.

The protein resides in the mitochondrion. The polypeptide is Small ribosomal subunit protein bS6m (Mrps6) (Mus musculus (Mouse)).